A 206-amino-acid polypeptide reads, in one-letter code: Ras-related protein Ral-B (206 aa).

21-29 lines the GTP pocket; it reads GSGGVGKSA. The Effector region motif lies at 43–51; that stretch reads YEPTKADSY. GTP is bound by residues 68–72, 128–131, and 158–160; these read DTAGQ, NKSD, and SAK. Residues 180–189 show a composition bias toward basic and acidic residues; sequence KMSENKDKNG. A disordered region spans residues 180–206; the sequence is KMSENKDKNGKKSSKNKKSFKERCCLL. At Cys-203 the chain carries Cysteine methyl ester. Residue Cys-203 is the site of S-geranylgeranyl cysteine attachment. A propeptide spans 204-206 (removed in mature form); sequence CLL.

Belongs to the small GTPase superfamily. Ras family. In terms of assembly, interacts with EXOC2/Sec5 and EXOC8/Exo84. Interacts (via effector domain) with RALBP1. Prenylation is essential for membrane localization. Post-translationally, the farnesylated form confers resistance to the proapoptotic and anti-anchorage-dependent growth effects of some geranylgeranyltransferase I inhibitors.

It localises to the cell membrane. Its subcellular location is the midbody. It catalyses the reaction GTP + H2O = GDP + phosphate + H(+). With respect to regulation, alternates between an inactive form bound to GDP and an active form bound to GTP. Activated by a guanine nucleotide-exchange factor (GEF) and inactivated by a GTPase-activating protein (GAP). Functionally, multifunctional GTPase involved in a variety of cellular processes including gene expression, cell migration, cell proliferation, oncogenic transformation and membrane trafficking. Accomplishes its multiple functions by interacting with distinct downstream effectors. Acts as a GTP sensor for GTP-dependent exocytosis of dense core vesicles. Required both to stabilize the assembly of the exocyst complex and to localize functional exocyst complexes to the leading edge of migrating cells. Required for suppression of apoptosis. In late stages of cytokinesis, upon completion of the bridge formation between dividing cells, mediates exocyst recruitment to the midbody to drive abscission. Involved in ligand-dependent receptor mediated endocytosis of the EGF and insulin receptors. This is Ras-related protein Ral-B (RALB) from Pongo abelii (Sumatran orangutan).